Consider the following 172-residue polypeptide: Immune protein Tsi1 (172 aa).

The first 19 residues, 1–19 (MKLLAGSFAALFLSLSAQA), serve as a signal peptide directing secretion. 3 cysteine pairs are disulfide-bonded: Cys22-Cys167, Cys79-Cys121, and Cys147-Cys155.

Forms a heterotetramer with Tse1 consisting of two Tse1 dimers and two Tsi1 dimers. Formation of the complex inactivates Tse1 enzymatic activity.

Its function is as follows. Immunity protein that plays a role in preventing early activation of toxin Tse1. Binds to a large surface of Tse1 and thereby occludes the active site to specifically inhibits enzyme activity by forming a hydrogen bond with the catalytic diad. The protein is Immune protein Tsi1 of Pseudomonas aeruginosa (strain ATCC 15692 / DSM 22644 / CIP 104116 / JCM 14847 / LMG 12228 / 1C / PRS 101 / PAO1).